A 264-amino-acid polypeptide reads, in one-letter code: Thymidylate synthase (264 aa).

DUMP contacts are provided by residues Arg21 and 126 to 127; that span reads RR. The Nucleophile role is filled by Cys146. Residues 166–169, Asn177, and 207–209 each bind dUMP; these read RSAD and HLY. Residue Asp169 participates in (6R)-5,10-methylene-5,6,7,8-tetrahydrofolate binding. Ala263 is a binding site for (6R)-5,10-methylene-5,6,7,8-tetrahydrofolate.

The protein belongs to the thymidylate synthase family. Bacterial-type ThyA subfamily. In terms of assembly, homodimer.

Its subcellular location is the cytoplasm. The catalysed reaction is dUMP + (6R)-5,10-methylene-5,6,7,8-tetrahydrofolate = 7,8-dihydrofolate + dTMP. It participates in pyrimidine metabolism; dTTP biosynthesis. Catalyzes the reductive methylation of 2'-deoxyuridine-5'-monophosphate (dUMP) to 2'-deoxythymidine-5'-monophosphate (dTMP) while utilizing 5,10-methylenetetrahydrofolate (mTHF) as the methyl donor and reductant in the reaction, yielding dihydrofolate (DHF) as a by-product. This enzymatic reaction provides an intracellular de novo source of dTMP, an essential precursor for DNA biosynthesis. This Rhodopseudomonas palustris (strain BisB5) protein is Thymidylate synthase.